The sequence spans 269 residues: MGLLSVDLLITLQILPWFFSNCLFLALYDSVVLLKHVILLLSCSKSSRGEWRRMLTSEGLRTVWNSFLLDAYKQVKLGGDAPNSKVVRVTSGCCRRRSFSGKGESECHLLDFASSNRPLVVNFGSATUPPFISQLPTFRKLVEEFSDVADFLLVYIDEAHPADGWAAPGVATKSFEVKKHRSQEERCVAAHKLLEHFSLPPQCQVVADCMDNNTNVAYGVSFERVCIVQRQKIAYLGGKGPFFYNLKEVRHWLEQTYRKRUVPTCELIM.

Residues 1–7 (MGLLSVD) lie on the Lumenal side of the membrane. The helical; Signal-anchor for type III membrane protein transmembrane segment at 8-28 (LLITLQILPWFFSNCLFLALY) threads the bilayer. Over 29 to 269 (DSVVLLKHVI…RUVPTCELIM (241 aa)) the chain is Cytoplasmic. Residue Sec128 is part of the active site. 2 non-standard amino acids (selenocysteine) are found at residues Sec128 and Sec261.

This sequence belongs to the iodothyronine deiodinase family. In terms of assembly, predominantly monomer. Can form homodimers but homodimerization is not essential for enzyme activity.

It is found in the endoplasmic reticulum membrane. The catalysed reaction is 3,3',5-triiodo-L-thyronine + iodide + A + H(+) = L-thyroxine + AH2. The enzyme catalyses 3,3'-diiodo-L-thyronine + iodide + A + H(+) = 3,3',5'-triiodo-L-thyronine + AH2. It carries out the reaction 3'-iodo-L-thyronine + iodide + A + H(+) = 3',5'-diiodo-L-thyronine + AH2. It catalyses the reaction 3,3'-diiodothyronamine + iodide + A + H(+) = 3,3',5'-triiodothyronamine + AH2. The catalysed reaction is 3'-iodothyronamine + iodide + A + H(+) = 3',5'-diiodothyronamine + AH2. Plays a crucial role in the metabolism of thyroid hormones (TH) and has specific roles in TH activation and inactivation by deiodination. Catalyzes the deiodination of L-thyroxine (T4) to 3,5,3'-triiodothyronine (T3), 3,3',5'-triiodothyronine (rT3) to 3,3'-diiodothyronine (3,3'-T2) and 3',5'-diiodothyronine (3',5'-T2) to 3'-monoiodothyronine (3'-T1) via outer-ring deiodination (ORD). Catalyzes the phenolic ring deiodinations of 3,3',5'-triiodothyronamine and 3',5'- diiodothyronamine. The polypeptide is Type II iodothyronine deiodinase (dio2) (Neoceratodus forsteri (Australian lungfish)).